A 549-amino-acid polypeptide reads, in one-letter code: Frizzled/smoothened-like sans CRD protein A (549 aa).

Residues 1–22 (MKFNFKLILIILIINQILIINC) form the signal peptide. Topologically, residues 23–89 (KENKILEIYK…EVNTLSLMIK (67 aa)) are extracellular. The N-linked (GlcNAc...) asparagine glycan is linked to N63. The helical transmembrane segment at 90–110 (ITGTISFIASLILLLIYSPLI) threads the bilayer. The Cytoplasmic portion of the chain corresponds to 111 to 119 (NRMGYNRHT). Residues 120–140 (IGIFFLTFSVFLIMLTDIIYV) form a helical membrane-spanning segment. The Extracellular segment spans residues 141-162 (HHGNDLICPQSHRYSRQNDSGC). Residue N158 is glycosylated (N-linked (GlcNAc...) asparagine). The helical transmembrane segment at 163–183 (TITGILFQYGCIAAVLFWATL) threads the bilayer. Over 184-198 (SLDLYLTLKKISTKK) the chain is Cytoplasmic. A helical transmembrane segment spans residues 199–219 (VEKWYLIILTLIALILTFVPL). Residues 220–241 (VKKSYGYLVTGLACWILDSTDQ) lie on the Extracellular side of the membrane. A helical transmembrane segment spans residues 242–262 (IIFFWAPFTAILGIGSILIVL). The Cytoplasmic segment spans residues 263 to 287 (VVYEIYKISKITKQNRGIFQSHIRP). The chain crosses the membrane as a helical span at residues 288–308 (LLMVLFIFGQFLFILAFNALI). Residues 309–346 (NNKYDEYSARMDSYIDCLFSSSSYSYLCRLKTFPFEME) are Extracellular-facing. A helical membrane pass occupies residues 347 to 367 (FIVLFFLRLIGIEVLIFYGFT). Residues 368–549 (QQTKKILLHS…NNNSNNDENN (182 aa)) lie on the Cytoplasmic side of the membrane. 2 stretches are compositionally biased toward low complexity: residues 417-474 (NNNN…SQQN) and 536-549 (NKNI…DENN). Disordered stretches follow at residues 417 to 483 (NNNN…QKLS) and 528 to 549 (QYEE…DENN). Residues 432 to 475 (NNLNNNLNNNNLNNNNNLNNLNNLNINNNLKNSQNNLNNSQQNE) are a coiled coil.

The protein belongs to the G-protein coupled receptor Fz/Smo family.

The protein localises to the membrane. The polypeptide is Frizzled/smoothened-like sans CRD protein A (fscA) (Dictyostelium discoideum (Social amoeba)).